The chain runs to 454 residues: Venom prothrombin activator porpharin-D (454 aa).

A signal peptide spans 1–20; sequence MAPQLLLCLILTFLWSLPEA. A propeptide spanning residues 21-40 is cleaved from the precursor; that stretch reads ESNVFLKSKEANRFLQRTKR. Residues 41 to 86 form the Gla domain; the sequence is SNSLFEEFRPGNIERECIEEKCSKEEAREIFKDNEKTEAFWNVYVD. 10 positions are modified to 4-carboxyglutamate: Glu46, Glu47, Glu54, Glu56, Glu59, Glu60, Glu65, Glu66, Glu69, and Glu75. Cysteines 57 and 62 form a disulfide. One can recognise an EGF-like 1; calcium-binding domain in the interval 86–122; it reads DGDQCSSNPCHYGGTCKDGIGSYTCTCLPNYEGKNCE. Cystine bridges form between Cys90–Cys101, Cys95–Cys110, Cys112–Cys121, Cys129–Cys140, Cys136–Cys149, Cys151–Cys164, Cys172–Cys316, Cys216–Cys221, Cys236–Cys252, Cys364–Cys378, and Cys389–Cys417. O-linked (Hex...) serine glycosylation occurs at Ser92. An EGF-like 2 domain is found at 129–164; the sequence is CRFFNGNCWHFCKPVQNDTQCSCAESYRLGDDGHSC. Positions 182-209 are cleaved as a propeptide — activation peptide; it reads REASLPDFVQSQNATLLKKSDNPSPDIR. Residues 210–441 enclose the Peptidase S1 domain; sequence IINGMDCKLG…FIPWIKAVMR (232 aa). Active-site charge relay system residues include His251 and Asp296. Ser393 functions as the Charge relay system in the catalytic mechanism.

This sequence belongs to the peptidase S1 family. Snake venom subfamily. In terms of assembly, heterodimer of a light chain and a heavy chain; disulfide-linked. In terms of processing, the vitamin K-dependent, enzymatic carboxylation of some glutamate residues allows the modified protein to bind calcium. Expressed by the venom gland.

The protein localises to the secreted. It carries out the reaction Selective cleavage of Arg-|-Thr and then Arg-|-Ile bonds in prothrombin to form thrombin.. In terms of biological role, snake prothrombin activator that attacks the hemostatic system of prey. This protein is functionally similar to blood coagulation factor Xa. The chain is Venom prothrombin activator porpharin-D from Pseudechis porphyriacus (Red-bellied black snake).